The chain runs to 369 residues: Galactose-1-phosphate uridylyltransferase (369 aa).

Zn(2+) is bound by residues cysteine 54 and cysteine 57. UDP-alpha-D-glucose is bound by residues alanine 63 and 79–80 (ND). Histidine 127 serves as a coordination point for Zn(2+). Residue asparagine 172 participates in UDP-alpha-D-glucose binding. Histidine 183 serves as a coordination point for Zn(2+). Catalysis depends on histidine 185, which acts as the Tele-UMP-histidine intermediate. UDP-alpha-D-glucose is bound at residue glutamine 187. Fe cation contacts are provided by glutamate 201, histidine 300, histidine 317, and histidine 319. Residues 332-335 (KFCV) and 337-338 (FE) contribute to the UDP-alpha-D-glucose site.

Belongs to the galactose-1-phosphate uridylyltransferase type 1 family. As to quaternary structure, homodimer. It depends on Zn(2+) as a cofactor.

The enzyme catalyses alpha-D-galactose 1-phosphate + UDP-alpha-D-glucose = alpha-D-glucose 1-phosphate + UDP-alpha-D-galactose. Its pathway is carbohydrate metabolism; galactose metabolism. This chain is Galactose-1-phosphate uridylyltransferase (gal7), found in Schizosaccharomyces pombe (strain 972 / ATCC 24843) (Fission yeast).